A 353-amino-acid chain; its full sequence is UDP-3-O-acylglucosamine N-acyltransferase (353 aa).

The active-site Proton acceptor is the H242.

The protein belongs to the transferase hexapeptide repeat family. LpxD subfamily. Homotrimer.

It carries out the reaction a UDP-3-O-[(3R)-3-hydroxyacyl]-alpha-D-glucosamine + a (3R)-hydroxyacyl-[ACP] = a UDP-2-N,3-O-bis[(3R)-3-hydroxyacyl]-alpha-D-glucosamine + holo-[ACP] + H(+). It functions in the pathway bacterial outer membrane biogenesis; LPS lipid A biosynthesis. Functionally, catalyzes the N-acylation of UDP-3-O-acylglucosamine using 3-hydroxyacyl-ACP as the acyl donor. Is involved in the biosynthesis of lipid A, a phosphorylated glycolipid that anchors the lipopolysaccharide to the outer membrane of the cell. The protein is UDP-3-O-acylglucosamine N-acyltransferase of Pseudomonas aeruginosa (strain UCBPP-PA14).